The primary structure comprises 131 residues: Gem-associated protein 7 (131 aa).

M1 carries the post-translational modification N-acetylmethionine. The 29-residue stretch at 1-29 (MQTPVNIPVPVLRLPRGPDGFSRGFAPDG) folds into the SUZ-C domain. Position 3 is a phosphothreonine (T3). The Sm domain occupies 65-131 (RYLRSLLAMV…SDIISYTFKP (67 aa)).

It belongs to the gemin-7 family. In terms of assembly, part of the core SMN complex that contains SMN1, GEMIN2/SIP1, DDX20/GEMIN3, GEMIN4, GEMIN5, GEMIN6, GEMIN7, GEMIN8 and STRAP/UNRIP. Part of the SMN-Sm complex that contains SMN1, GEMIN2/SIP1, DDX20/GEMIN3, GEMIN4, GEMIN5, GEMIN6, GEMIN7, GEMIN8, STRAP/UNRIP and the Sm proteins SNRPB, SNRPD1, SNRPD2, SNRPD3, SNRPE, SNRPF and SNRPG. Interacts with GEMIN6; the interaction is direct. Interacts with STRAP/UNRIP; the interaction is direct. Interacts with GEMIN8; the interaction is direct. Interacts with SNRPB, SNRPD2, SNRPD3 and SNRPE; the interaction is direct.

The protein resides in the nucleus. Its subcellular location is the nucleoplasm. It localises to the gem. It is found in the cytoplasm. In terms of biological role, the SMN complex catalyzes the assembly of small nuclear ribonucleoproteins (snRNPs), the building blocks of the spliceosome, and thereby plays an important role in the splicing of cellular pre-mRNAs. Most spliceosomal snRNPs contain a common set of Sm proteins SNRPB, SNRPD1, SNRPD2, SNRPD3, SNRPE, SNRPF and SNRPG that assemble in a heptameric protein ring on the Sm site of the small nuclear RNA to form the core snRNP (Sm core). In the cytosol, the Sm proteins SNRPD1, SNRPD2, SNRPE, SNRPF and SNRPG are trapped in an inactive 6S pICln-Sm complex by the chaperone CLNS1A that controls the assembly of the core snRNP. To assemble core snRNPs, the SMN complex accepts the trapped 5Sm proteins from CLNS1A forming an intermediate. Binding of snRNA inside 5Sm triggers eviction of the SMN complex, thereby allowing binding of SNRPD3 and SNRPB to complete assembly of the core snRNP. This chain is Gem-associated protein 7 (GEMIN7), found in Homo sapiens (Human).